Here is a 478-residue protein sequence, read N- to C-terminus: Ribosomal RNA small subunit methyltransferase F (478 aa).

Residues 123–129 (AAAPGSK), glutamate 147, aspartate 174, and aspartate 192 contribute to the S-adenosyl-L-methionine site. Residue cysteine 245 is the Nucleophile of the active site.

It belongs to the class I-like SAM-binding methyltransferase superfamily. RsmB/NOP family.

Its subcellular location is the cytoplasm. It carries out the reaction cytidine(1407) in 16S rRNA + S-adenosyl-L-methionine = 5-methylcytidine(1407) in 16S rRNA + S-adenosyl-L-homocysteine + H(+). Functionally, specifically methylates the cytosine at position 1407 (m5C1407) of 16S rRNA. In Vibrio parahaemolyticus serotype O3:K6 (strain RIMD 2210633), this protein is Ribosomal RNA small subunit methyltransferase F.